Reading from the N-terminus, the 142-residue chain is Deoxyuridine 5'-triphosphate nucleotidohydrolase (142 aa).

Substrate-binding positions include 62–64 (RSG), N75, and 79–81 (TID).

This sequence belongs to the dUTPase family. Mg(2+) is required as a cofactor.

It carries out the reaction dUTP + H2O = dUMP + diphosphate + H(+). The protein operates within pyrimidine metabolism; dUMP biosynthesis; dUMP from dCTP (dUTP route): step 2/2. This enzyme is involved in nucleotide metabolism: it produces dUMP, the immediate precursor of thymidine nucleotides and it decreases the intracellular concentration of dUTP so that uracil cannot be incorporated into DNA. This chain is Deoxyuridine 5'-triphosphate nucleotidohydrolase, found in Crocosphaera subtropica (strain ATCC 51142 / BH68) (Cyanothece sp. (strain ATCC 51142)).